We begin with the raw amino-acid sequence, 246 residues long: Anamorsin homolog (246 aa).

The N-terminal SAM-like domain stretch occupies residues 1–124 (MRVVVVDLDG…ARGTAFSLKS (124 aa)). The linker stretch occupies residues 125–158 (RAVRVVTADAGWGADADVDDELIDESALLTELDV). Positions 168, 177, 180, and 182 each coordinate [2Fe-2S] cluster. The fe-S binding site A stretch occupies residues 168 to 182 (CDVGAGKKACKNCTC). [4Fe-4S] cluster-binding residues include cysteine 206, cysteine 209, cysteine 217, and cysteine 220. Short sequence motifs (cx2C motif) lie at residues 206-209 (CGNC) and 217-220 (CAGC). Residues 206–220 (CGNCALGDAFRCAGC) are fe-S binding site B.

Belongs to the anamorsin family. In terms of assembly, monomer. The cofactor is [2Fe-2S] cluster. It depends on [4Fe-4S] cluster as a cofactor.

The protein localises to the cytoplasm. It is found in the mitochondrion intermembrane space. Component of the cytosolic iron-sulfur (Fe-S) protein assembly (CIA) machinery. Required for the maturation of extramitochondrial Fe-S proteins. Part of an electron transfer chain functioning in an early step of cytosolic Fe-S biogenesis, facilitating the de novo assembly of a [4Fe-4S] cluster on the cytosolic Fe-S scaffold complex. Electrons are transferred from NADPH via a FAD- and FMN-containing diflavin oxidoreductase. Together with the diflavin oxidoreductase, also required for the assembly of the diferric tyrosyl radical cofactor of ribonucleotide reductase (RNR), probably by providing electrons for reduction during radical cofactor maturation in the catalytic small subunit. The polypeptide is Anamorsin homolog (Ostreococcus tauri).